We begin with the raw amino-acid sequence, 235 residues long: Ribonuclease 3 (235 aa).

Residues 11 to 137 (RAWCAEALGY…VVGALYLDGG (127 aa)) enclose the RNase III domain. Glu-51 serves as a coordination point for Mg(2+). Asp-55 is an active-site residue. Positions 123 and 126 each coordinate Mg(2+). Glu-126 is a catalytic residue. Residues 164–233 (DYKTQLQEQL…ARQALMPEHH (70 aa)) enclose the DRBM domain.

Belongs to the ribonuclease III family. As to quaternary structure, homodimer. Requires Mg(2+) as cofactor.

It is found in the cytoplasm. The enzyme catalyses Endonucleolytic cleavage to 5'-phosphomonoester.. Its function is as follows. Digests double-stranded RNA. Involved in the processing of primary rRNA transcript to yield the immediate precursors to the large and small rRNAs (23S and 16S). Processes some mRNAs, and tRNAs when they are encoded in the rRNA operon. Processes pre-crRNA and tracrRNA of type II CRISPR loci if present in the organism. The chain is Ribonuclease 3 from Symbiobacterium thermophilum (strain DSM 24528 / JCM 14929 / IAM 14863 / T).